Here is a 122-residue protein sequence, read N- to C-terminus: Large ribosomal subunit protein uL18 (122 aa).

It belongs to the universal ribosomal protein uL18 family. Part of the 50S ribosomal subunit; part of the 5S rRNA/L5/L18/L25 subcomplex. Contacts the 5S and 23S rRNAs.

Its function is as follows. This is one of the proteins that bind and probably mediate the attachment of the 5S RNA into the large ribosomal subunit, where it forms part of the central protuberance. The polypeptide is Large ribosomal subunit protein uL18 (Trichlorobacter lovleyi (strain ATCC BAA-1151 / DSM 17278 / SZ) (Geobacter lovleyi)).